A 156-amino-acid chain; its full sequence is Small ribosomal subunit protein uS7 (156 aa).

Belongs to the universal ribosomal protein uS7 family. As to quaternary structure, part of the 30S ribosomal subunit. Contacts proteins S9 and S11.

In terms of biological role, one of the primary rRNA binding proteins, it binds directly to 16S rRNA where it nucleates assembly of the head domain of the 30S subunit. Is located at the subunit interface close to the decoding center, probably blocks exit of the E-site tRNA. The sequence is that of Small ribosomal subunit protein uS7 from Shewanella piezotolerans (strain WP3 / JCM 13877).